Reading from the N-terminus, the 396-residue chain is Phosphoglycerate kinase (396 aa).

Substrate is bound by residues 21-23 (DIN), R36, 59-62 (HFGR), R118, and R151. ATP-binding positions include K201, E323, and 353–356 (GGDT).

It belongs to the phosphoglycerate kinase family. As to quaternary structure, monomer.

It is found in the cytoplasm. It carries out the reaction (2R)-3-phosphoglycerate + ATP = (2R)-3-phospho-glyceroyl phosphate + ADP. Its pathway is carbohydrate degradation; glycolysis; pyruvate from D-glyceraldehyde 3-phosphate: step 2/5. The sequence is that of Phosphoglycerate kinase from Ruegeria sp. (strain TM1040) (Silicibacter sp.).